The following is a 508-amino-acid chain: E3 ubiquitin-protein ligase XBAT32 (508 aa).

ANK repeat units lie at residues 50-79, 83-112, 117-147, 177-206, and 220-249; these read VRNS…DINL, RGQT…NIHR, NGGT…SVPN, GGIT…SVTQ, and AGST…CLAA. The RING-type zinc finger occupies 321-372; sequence CAVCLERKCTVAADGCAHEFCTNCALYLSTTSITSSKTSNVTPGSVPCPLCR.

As to quaternary structure, interacts with ACS4 and ACS7. As to expression, expressed in the vascular system of primary root, vascular tissue of leaves, stems and anthers.

The catalysed reaction is S-ubiquitinyl-[E2 ubiquitin-conjugating enzyme]-L-cysteine + [acceptor protein]-L-lysine = [E2 ubiquitin-conjugating enzyme]-L-cysteine + N(6)-ubiquitinyl-[acceptor protein]-L-lysine.. Its pathway is protein modification; protein ubiquitination. In terms of biological role, E3 ubiquitin-protein ligase that mediates ubiquitination of ACC synthases (ACS). Negatively regulates ethylene biosynthesis probably via ubiquitin-dependent degradation of ACS4 and ACS7 enzymes. Regulates lateral root formation and development by controlling ethylene production which inhibits lateral root formation at high concentration. The sequence is that of E3 ubiquitin-protein ligase XBAT32 (XBAT32) from Arabidopsis thaliana (Mouse-ear cress).